The sequence spans 561 residues: Glutamate--tRNA ligase (561 aa).

Residues 107-117 carry the 'HIGH' region motif; sequence PNPSGPLHLGH.

This sequence belongs to the class-I aminoacyl-tRNA synthetase family. Glutamate--tRNA ligase type 2 subfamily.

It localises to the cytoplasm. The enzyme catalyses tRNA(Glu) + L-glutamate + ATP = L-glutamyl-tRNA(Glu) + AMP + diphosphate. Functionally, catalyzes the attachment of glutamate to tRNA(Glu) in a two-step reaction: glutamate is first activated by ATP to form Glu-AMP and then transferred to the acceptor end of tRNA(Glu). The polypeptide is Glutamate--tRNA ligase (Methanospirillum hungatei JF-1 (strain ATCC 27890 / DSM 864 / NBRC 100397 / JF-1)).